A 246-amino-acid polypeptide reads, in one-letter code: Transcription factor MYB13 (246 aa).

2 HTH myb-type domains span residues 9–61 (KIGL…INYL) and 62–116 (RPDI…KKRL). 2 DNA-binding regions (H-T-H motif) span residues 37–61 (WRALPKLAGLLRCGKSCRLRWINYL) and 89–112 (WSAIAAKLPGRTDNEIKNVWHTHL).

In terms of tissue distribution, expressed in roots and flowers. Expressed in shoot apex, axillary buds, at the basis of flowers and branching points of inflorescences.

The protein resides in the nucleus. Its function is as follows. Plays a regulatory role in meristem function. Functions as component of a regulatory network controlling the establishment and/or development of the shoot system by the regulation of apical meristem function. May play a role in tolerance to boric acid. This chain is Transcription factor MYB13, found in Arabidopsis thaliana (Mouse-ear cress).